A 199-amino-acid chain; its full sequence is Adenosylcobinamide-GDP ribazoletransferase (199 aa).

A run of 2 helical transmembrane segments spans residues 2–22 (LAGG…VFAV) and 61–81 (IAAV…VAAL).

Belongs to the CobS family. Mg(2+) serves as cofactor.

Its subcellular location is the cell membrane. The enzyme catalyses alpha-ribazole + adenosylcob(III)inamide-GDP = adenosylcob(III)alamin + GMP + H(+). It carries out the reaction alpha-ribazole 5'-phosphate + adenosylcob(III)inamide-GDP = adenosylcob(III)alamin 5'-phosphate + GMP + H(+). Its pathway is cofactor biosynthesis; adenosylcobalamin biosynthesis; adenosylcobalamin from cob(II)yrinate a,c-diamide: step 7/7. In terms of biological role, joins adenosylcobinamide-GDP and alpha-ribazole to generate adenosylcobalamin (Ado-cobalamin). Also synthesizes adenosylcobalamin 5'-phosphate from adenosylcobinamide-GDP and alpha-ribazole 5'-phosphate. In Halobacterium salinarum (strain ATCC 700922 / JCM 11081 / NRC-1) (Halobacterium halobium), this protein is Adenosylcobinamide-GDP ribazoletransferase.